A 152-amino-acid chain; its full sequence is MTSTLNTLKSNSGSRKKKLRKGRGIAAGQGASCGFGMRGQKSRSGRPTRPGFEGGQMPLYRRVPKLKHFEIINQKNFSIINLEKLNDFKDNDTVNIDSLVKKGLIFKPKFPLKILGNGKINVKLKVQAHSFTKVAKQKIEDAGGSCELINNK.

The interval 1 to 57 is disordered; it reads MTSTLNTLKSNSGSRKKKLRKGRGIAAGQGASCGFGMRGQKSRSGRPTRPGFEGGQM. Over residues 14–23 the composition is skewed to basic residues; that stretch reads SRKKKLRKGR. Over residues 25–37 the composition is skewed to gly residues; it reads IAAGQGASCGFGM.

This sequence belongs to the universal ribosomal protein uL15 family. In terms of assembly, part of the 50S ribosomal subunit.

Its function is as follows. Binds to the 23S rRNA. In Prochlorococcus marinus (strain AS9601), this protein is Large ribosomal subunit protein uL15.